A 414-amino-acid chain; its full sequence is Poly(3-hydroxyalkanoate) depolymerase C (414 aa).

Residues 1-37 form the signal peptide; it reads MLAKQIKKANSRSTLLRKSLLFAAPIILAVSSSSVYA. Ser154 (charge relay system) is an active-site residue.

This sequence belongs to the AB hydrolase superfamily. Lipase family.

It is found in the secreted. Functionally, specific for poly(hydroxyalkanoic acid) consisting of monomers of four or five carbon atoms and for P-nitrophenylbutyrate as substrates. The protein is Poly(3-hydroxyalkanoate) depolymerase C (phaZ1) of Paucimonas lemoignei (Pseudomonas lemoignei).